The sequence spans 86 residues: DNA-directed RNA polymerase subunit omega (86 aa).

Basic and acidic residues predominate over residues 67–76 (SAREHAKESQ). Positions 67–86 (SAREHAKESQVSEEEVREES) are disordered. A compositionally biased stretch (acidic residues) spans 77 to 86 (VSEEEVREES).

This sequence belongs to the RNA polymerase subunit omega family. In terms of assembly, the RNAP catalytic core consists of 2 alpha, 1 beta, 1 beta' and 1 omega subunit. When a sigma factor is associated with the core the holoenzyme is formed, which can initiate transcription.

The catalysed reaction is RNA(n) + a ribonucleoside 5'-triphosphate = RNA(n+1) + diphosphate. Its function is as follows. Promotes RNA polymerase assembly. Latches the N- and C-terminal regions of the beta' subunit thereby facilitating its interaction with the beta and alpha subunits. The sequence is that of DNA-directed RNA polymerase subunit omega from Nitrosococcus oceani (strain ATCC 19707 / BCRC 17464 / JCM 30415 / NCIMB 11848 / C-107).